Consider the following 284-residue polypeptide: 3-methyl-2-oxobutanoate hydroxymethyltransferase 2 (284 aa).

2 residues coordinate Mg(2+): D49 and D88. 3-methyl-2-oxobutanoate contacts are provided by residues 49–50 (DS), D88, and K118. E120 lines the Mg(2+) pocket. Catalysis depends on E187, which acts as the Proton acceptor.

This sequence belongs to the PanB family. In terms of assembly, homodecamer; pentamer of dimers. Mg(2+) serves as cofactor.

Its subcellular location is the cytoplasm. The enzyme catalyses 3-methyl-2-oxobutanoate + (6R)-5,10-methylene-5,6,7,8-tetrahydrofolate + H2O = 2-dehydropantoate + (6S)-5,6,7,8-tetrahydrofolate. It participates in cofactor biosynthesis; (R)-pantothenate biosynthesis; (R)-pantoate from 3-methyl-2-oxobutanoate: step 1/2. Catalyzes the reversible reaction in which hydroxymethyl group from 5,10-methylenetetrahydrofolate is transferred onto alpha-ketoisovalerate to form ketopantoate. The sequence is that of 3-methyl-2-oxobutanoate hydroxymethyltransferase 2 from Burkholderia ambifaria (strain ATCC BAA-244 / DSM 16087 / CCUG 44356 / LMG 19182 / AMMD) (Burkholderia cepacia (strain AMMD)).